We begin with the raw amino-acid sequence, 781 residues long: Molybdenum cofactor sulfurase (781 aa).

Lys246 is modified (N6-(pyridoxal phosphate)lysine). The active site involves Cys413. One can recognise an MOSC domain in the interval 635-781 (LRLLRQSGQR…MTCGDVVLVE (147 aa)). Phosphoserine is present on Ser734.

The protein belongs to the class-V pyridoxal-phosphate-dependent aminotransferase family. MOCOS subfamily. Requires pyridoxal 5'-phosphate as cofactor.

The catalysed reaction is Mo-molybdopterin + L-cysteine + AH2 = thio-Mo-molybdopterin + L-alanine + A + H2O. It participates in cofactor biosynthesis; molybdopterin biosynthesis. Functionally, sulfurates the molybdenum cofactor. Sulfation of molybdenum is essential for xanthine dehydrogenase (XDH) and aldehyde oxidase (ADO) enzymes in which molybdenum cofactor is liganded by 1 oxygen and 1 sulfur atom in active form. This Drosophila melanogaster (Fruit fly) protein is Molybdenum cofactor sulfurase.